The primary structure comprises 489 residues: Probable transporter MCH1 (489 aa).

3 consecutive transmembrane segments (helical) span residues 30-50 (IAYIFALFAAITSGFVSLISL), 68-88 (MIVTVINMGMYLTPPILGIIA), and 92-112 (GPITLSLSSVLGFIPSYAYLA). N-linked (GlcNAc...) asparagine glycosylation occurs at Asn-123. 8 helical membrane-spanning segments follow: residues 132-152 (TLVCFFIIGVATSGLYFSALI), 163-183 (LLSISIPTTCYGLSSLIGSQF), 202-222 (VFKAFAWIYTVIGVMIWIATS), 279-299 (VLYIFGATIFCALGPLEMFIA), 307-327 (VLAGGHEPAMSSALLSIYALT), 351-371 (WILLLFLVVGLVTQGKIYMLS), 388-408 (FYIGIMQGIAYGGLFTIYPTI), and 421-441 (AYGTLMIAPALGSALSCLIYA). An N-linked (GlcNAc...) asparagine glycan is attached at Asn-450. The chain crosses the membrane as a helical span at residues 462-482 (ETTALEFCAAILLTVVVTVLW).

The protein belongs to the major facilitator superfamily.

It is found in the vacuole membrane. Its function is as follows. Probable transporter. The protein is Probable transporter MCH1 (MCH1) of Candida glabrata (strain ATCC 2001 / BCRC 20586 / JCM 3761 / NBRC 0622 / NRRL Y-65 / CBS 138) (Yeast).